A 540-amino-acid polypeptide reads, in one-letter code: Ecdysone 20-monooxygenase (540 aa).

Cys488 provides a ligand contact to heme.

The protein belongs to the cytochrome P450 family. It depends on heme as a cofactor. Strong expression by embryonic stage 10 in epidermis, decreases significantly in older embryos. Third instar larvae show expression in the midgut copper cells, Malpighian tubules and fat body. In the adult ovaries, expression is seen in both nurse cells and centripetally migrating follicle cells.

It is found in the mitochondrion membrane. It carries out the reaction ecdysone + AH2 + O2 = 20-hydroxyecdysone + A + H2O. The protein operates within steroid biosynthesis; ecdysteroid biosynthesis. Functionally, required for CNS development; midline glial cells. Involved in the metabolism of insect hormones; responsible for all ecdysone 20-monooxygenase activity during embryonic, larval and adult stages. May be involved in the breakdown of synthetic insecticides. The protein is Ecdysone 20-monooxygenase (shd) of Drosophila melanogaster (Fruit fly).